Reading from the N-terminus, the 417-residue chain is Probable metalloprotease arx1 (417 aa).

It belongs to the peptidase M24 family. In terms of assembly, component of the nucleoplasmic and cytoplasmic pre-60S ribosomal particles.

The protein localises to the cytoplasm. The protein resides in the nucleus. Functionally, probable metalloprotease involved in proper assembly of pre-ribosomal particles during the biogenesis of the 60S ribosomal subunit. Accompanies the pre-60S particles to the cytoplasm. This chain is Probable metalloprotease arx1 (arx1), found in Schizosaccharomyces pombe (strain 972 / ATCC 24843) (Fission yeast).